The chain runs to 632 residues: MAU2 chromatid cohesion factor homolog (632 aa).

TPR repeat units lie at residues 453–486 (GGFY…ANAE) and 493–526 (SCSL…ASKI).

This sequence belongs to the SCC4/mau-2 family. As to quaternary structure, interacts with Nipped-B to form the cohesin loading complex.

It localises to the nucleus. Its subcellular location is the nucleoplasm. Functionally, required for association of the cohesin complex with chromatin during interphase. Plays a role in sister chromatid cohesion and normal progression through prometaphase. In Drosophila sechellia (Fruit fly), this protein is MAU2 chromatid cohesion factor homolog.